The following is a 417-amino-acid chain: MAAIINQRVDQGESSMGGAKPTLLHKIAGHVARINDVILLSKDEGVWTASDDRSVRLYLKRDNDQFWPSIHHFMPVAPTCLFYSEETYKLLVGLINGNVYEFNVADDFNSMTESRKWTCHAGPISGLGFALSSELIFSCSRDKSIVWHCSENSNKVGSYLLENSCTAMVIDLPFVFVGDHGGHVTVLRIIDNQPNLVSKLSAHTNSITSLTWDGNKKVLYSGSSDHLIIMWDIGGGKGEAYELNGHNGKVTTLCAAPAAKRLFSADEHGKLMCWDMDVRRVETPEWKTSDCCQKCNQPFFWNLQAMWQRKVVGLRQHHCRTCGSAVCGSCCDNWTTYPPMGYETKVRICNDCAGRMKENPGNFDLTPLAIPHEIRTGITAMHLQETLGLLVTSGQNRVVMIWDVRSVCSAPSGSGGH.

WD repeat units lie at residues 29–68 (GHVA…QFWP), 119–157 (CHAG…NKVG), 202–241 (AHTN…GEAY), and 245–284 (GHNG…VETP). The FYVE-type zinc-finger motif lies at 286–357 (WKTSDCCQKC…ICNDCAGRMK (72 aa)). Residues cysteine 292, cysteine 295, cysteine 319, cysteine 322, cysteine 327, cysteine 330, cysteine 349, and cysteine 352 each coordinate Zn(2+). One copy of the WD 5 repeat lies at 373 to 412 (EIRTGITAMHLQETLGLLVTSGQNRVVMIWDVRSVCSAPS).

Its function is as follows. Plays a role in coelomocyte endocytosis. The chain is WD repeat and FYVE domain-containing protein 2 from Caenorhabditis briggsae.